The sequence spans 278 residues: MALKTFNPTTPGQRQLVMVDRSALYKGKPVKRLTEGKNSNGGRNNTGRITVRFRGGGHKQAYRLVDFKRTKVDVPAKVERLEYDPNRTAFIALIKYEDGEQAYILAPQRLAVGDTVIAGAYVDVKPGNVMPLGNMPIGTIVHNVELKIGKGGQLARSAGTYAQIVGRDHDYVILRMNSGEQRLIHGRCIAAIGAVSNPDHMNISIGKAGRKRWLGRRPHNRGVVMNPIDHPHGGGEGRTSGGRHPVTPWGKPTKGKKTRSNKSTDKFILISRHKRKKK.

The segment at 222–278 (GVVMNPIDHPHGGGEGRTSGGRHPVTPWGKPTKGKKTRSNKSTDKFILISRHKRKKK) is disordered.

The protein belongs to the universal ribosomal protein uL2 family. As to quaternary structure, part of the 50S ribosomal subunit. Forms a bridge to the 30S subunit in the 70S ribosome.

One of the primary rRNA binding proteins. Required for association of the 30S and 50S subunits to form the 70S ribosome, for tRNA binding and peptide bond formation. It has been suggested to have peptidyltransferase activity; this is somewhat controversial. Makes several contacts with the 16S rRNA in the 70S ribosome. The chain is Large ribosomal subunit protein uL2 from Rhodopseudomonas palustris (strain ATCC BAA-98 / CGA009).